The primary structure comprises 529 residues: GTPase Obg (529 aa).

The 158-residue stretch at 2-159 (PTFVDRVVLH…LDAVLELKTV (158 aa)) folds into the Obg domain. Positions 62–86 (FHPHQRASRGRPGQGSNRHGADGAD) are disordered. The region spanning 160–332 (ADVALVGFPS…LSLALADLVA (173 aa)) is the OBG-type G domain. GTP-binding positions include 166–173 (GFPSAGKS), 191–195 (FTTLV), 213–216 (DVPG), 284–287 (NKID), and 313–315 (STA). Ser-173 and Thr-193 together coordinate Mg(2+). One can recognise an OCT domain in the interval 350-427 (PRAVNEPDFT…IGEVTFDWEP (78 aa)). Disordered regions lie at residues 434-494 (LGNG…DRLR) and 506-529 (ARRA…EEEG). Composition is skewed to low complexity over residues 461–472 (AGTAASGAAPSP) and 508–520 (RAAA…VRGE).

Belongs to the TRAFAC class OBG-HflX-like GTPase superfamily. OBG GTPase family. As to quaternary structure, monomer. Requires Mg(2+) as cofactor.

Its subcellular location is the cytoplasm. An essential GTPase which binds GTP, GDP and possibly (p)ppGpp with moderate affinity, with high nucleotide exchange rates and a fairly low GTP hydrolysis rate. Plays a role in control of the cell cycle, stress response, ribosome biogenesis and in those bacteria that undergo differentiation, in morphogenesis control. This Frankia casuarinae (strain DSM 45818 / CECT 9043 / HFP020203 / CcI3) protein is GTPase Obg.